The following is a 170-amino-acid chain: Acireductone dioxygenase (170 aa).

Fe(2+) is bound by residues histidine 99, histidine 101, glutamate 105, and histidine 144. 4 residues coordinate Ni(2+): histidine 99, histidine 101, glutamate 105, and histidine 144.

This sequence belongs to the acireductone dioxygenase (ARD) family. In terms of assembly, monomer. Fe(2+) is required as a cofactor. It depends on Ni(2+) as a cofactor.

It catalyses the reaction 1,2-dihydroxy-5-(methylsulfanyl)pent-1-en-3-one + O2 = 3-(methylsulfanyl)propanoate + CO + formate + 2 H(+). It carries out the reaction 1,2-dihydroxy-5-(methylsulfanyl)pent-1-en-3-one + O2 = 4-methylsulfanyl-2-oxobutanoate + formate + 2 H(+). It functions in the pathway amino-acid biosynthesis; L-methionine biosynthesis via salvage pathway; L-methionine from S-methyl-5-thio-alpha-D-ribose 1-phosphate: step 5/6. Functionally, catalyzes 2 different reactions between oxygen and the acireductone 1,2-dihydroxy-3-keto-5-methylthiopentene (DHK-MTPene) depending upon the metal bound in the active site. Fe-containing acireductone dioxygenase (Fe-ARD) produces formate and 2-keto-4-methylthiobutyrate (KMTB), the alpha-ketoacid precursor of methionine in the methionine recycle pathway. Ni-containing acireductone dioxygenase (Ni-ARD) produces methylthiopropionate, carbon monoxide and formate, and does not lie on the methionine recycle pathway. The chain is Acireductone dioxygenase from Bacillus cereus (strain ATCC 14579 / DSM 31 / CCUG 7414 / JCM 2152 / NBRC 15305 / NCIMB 9373 / NCTC 2599 / NRRL B-3711).